The primary structure comprises 217 residues: Frataxin, mitochondrial (217 aa).

The N-terminal 42 residues, 1–42 (MWTLGRRSVASFLPRSALPGFAPTRAGAPRPAKDLSLSGLPG), are a transit peptide targeting the mitochondrion.

This sequence belongs to the frataxin family. As to quaternary structure, component of the mitochondrial core iron-sulfur cluster (ISC) complex composed of NFS1, LYRM4, NDUFAB1, ISCU, FXN, and FDX2; this complex is a heterohexamer containing two copies of each monomer. Homodimer. Monomer (probable predominant form). Oligomer. Monomers and polymeric aggregates of &gt;1 MDa have been isolated from mitochondria. A small fraction of heterologous overexpressed recombinant frataxin forms high-molecular weight aggregates that incorporate iron. Interacts with LYRM4. Interacts (via ferrous form) with ISCU; the interaction is possible when both are bound to the dimeric form of the cysteine desulfurase complex (NFS1:LYRM4) and the interaction enhances FXN interaction to the dimeric form of the cysteine desulfurase complex (NFS1:LYRM4). Interacts with FECH; one iron-bound FXN monomer seems to interact with a FECH homodimer. Interacts with SDHA and SDHB. Interacts with ACO2; the interaction is dependent on citrate. Interacts with HSPA9. In terms of assembly, interacts with ACO1. Interacts with ISCU (cytoplasmic form). Post-translationally, processed in two steps by mitochondrial processing peptidase (MPP). MPP first cleaves the precursor to intermediate form and subsequently converts the intermediate to yield frataxin mature form (frataxin(81-210)) which is the predominant form. The additional forms, frataxin(56-210) and frataxin(78-210), seem to be produced when the normal maturation process is impaired; their physiological relevance is unsure.

The protein resides in the mitochondrion. It is found in the cytoplasm. The protein localises to the cytosol. The catalysed reaction is 4 Fe(2+) + O2 + 4 H(+) = 4 Fe(3+) + 2 H2O. Functionally, functions as an activator of persulfide transfer to the scaffoding protein ISCU as component of the core iron-sulfur cluster (ISC) assembly complex and participates to the [2Fe-2S] cluster assembly. Accelerates sulfur transfer from NFS1 persulfide intermediate to ISCU and to small thiols such as L-cysteine and glutathione leading to persulfuration of these thiols and ultimately sulfide release. Binds ferrous ion and is released from FXN upon the addition of both L-cysteine and reduced FDX2 during [2Fe-2S] cluster assembly. The core iron-sulfur cluster (ISC) assembly complex is involved in the de novo synthesis of a [2Fe-2S] cluster, the first step of the mitochondrial iron-sulfur protein biogenesis. This process is initiated by the cysteine desulfurase complex (NFS1:LYRM4:NDUFAB1) that produces persulfide which is delivered on the scaffold protein ISCU in a FXN-dependent manner. Then this complex is stabilized by FDX2 which provides reducing equivalents to accomplish the [2Fe-2S] cluster assembly. Finally, the [2Fe-2S] cluster is transferred from ISCU to chaperone proteins, including HSCB, HSPA9 and GLRX5. May play a role in the protection against iron-catalyzed oxidative stress through its ability to catalyze the oxidation of Fe(2+) to Fe(3+); the oligomeric form but not the monomeric form has in vitro ferroxidase activity. May be able to store large amounts of iron in the form of a ferrihydrite mineral by oligomerization; however, the physiological relevance is unsure as reports are conflicting and the function has only been shown using heterologous overexpression systems. May function as an iron chaperone protein that protects the aconitase [4Fe-4S]2+ cluster from disassembly and promotes enzyme reactivation. May play a role as a high affinity iron binding partner for FECH that is capable of both delivering iron to ferrochelatase and mediating the terminal step in mitochondrial heme biosynthesis. Modulates the RNA-binding activity of ACO1. May be involved in the cytoplasmic iron-sulfur protein biogenesis. May contribute to oxidative stress resistance and overall cell survival. This Bos taurus (Bovine) protein is Frataxin, mitochondrial.